A 675-amino-acid chain; its full sequence is MPHSIETQLEHLREKLREYEYHYHVLDNPLVPDAEYDRLMNELKNLEWQHPELITSDSPTQRVGAKPLDGFAQITHEIPMLSLDNAFSDDDLTGFLRRIEDRIAINSNQIEFCCEPKLDGLAVSILYVDGVLTQAATRGDGTTGEDITANIRTIRNIPLKLKTNNPPHRLEVRGEVFMPQQGFEQLNEKALAKGEKTFANPRNAAAGSLRQLDPKITSQRPLMLNAYNIGVYESDDELPTTHFDRLQWLKTLGIPVNAEITLATGSQALTAFYQKIQAKRSSLGYDIDGTVLKVNEITLQEQLGFISKAPRWAIAYKFPAQEEMTILNDVEFQVGRTGAITPVAKLEPVFVAGVTVSNATLHNGDEIERLGIAIGDTVIIRRAGDVIPQIVGVVAERRPDNAKKIAFPTACPVCNSAVVRVEGEAVARCTGGLFCGAQRKEALKHFVSRKAMDIDGVGEKLIEQLMERELIHTPADLFKLDHTTLMRLDRMGEKSANNALQSIEKAKNTTLARFLFALGIRDVGESTAQNLANHFGTLDAIRQADLDTLKQVQDVGEVVANRLFQFWQEPHNVEVVEDLIAQGVTWQDVVPQEIADNPLKDKTVVLTGTLTQLTRDQAKALLQQLGCKVSGSVSSKTDYLIAGEKAGSKLAKAQELGVKILSEDELIGYFTTIVS.

NAD(+) is bound by residues Asp33 to Asp37, Ser82 to Leu83, and Glu115. Lys117 functions as the N6-AMP-lysine intermediate in the catalytic mechanism. Positions 138, 175, 293, and 317 each coordinate NAD(+). Cys411, Cys414, Cys429, and Cys435 together coordinate Zn(2+). A BRCT domain is found at Ile594–Ser675.

This sequence belongs to the NAD-dependent DNA ligase family. LigA subfamily. It depends on Mg(2+) as a cofactor. Requires Mn(2+) as cofactor.

The enzyme catalyses NAD(+) + (deoxyribonucleotide)n-3'-hydroxyl + 5'-phospho-(deoxyribonucleotide)m = (deoxyribonucleotide)n+m + AMP + beta-nicotinamide D-nucleotide.. Its function is as follows. DNA ligase that catalyzes the formation of phosphodiester linkages between 5'-phosphoryl and 3'-hydroxyl groups in double-stranded DNA using NAD as a coenzyme and as the energy source for the reaction. It is essential for DNA replication and repair of damaged DNA. In Glaesserella parasuis serovar 5 (strain SH0165) (Haemophilus parasuis), this protein is DNA ligase.